A 125-amino-acid chain; its full sequence is Meiotically up-regulated gene 112 protein (125 aa).

Its subcellular location is the golgi apparatus. In terms of biological role, has a role in meiosis. The chain is Meiotically up-regulated gene 112 protein (mug112) from Schizosaccharomyces pombe (strain 972 / ATCC 24843) (Fission yeast).